Consider the following 156-residue polypeptide: Transcriptional repressor NrdR (156 aa).

Residues 3–34 fold into a zinc finger; sequence CPFCGSMDTRVLDSRPTLDGAAIRRRRECISC. Residues 49-139 enclose the ATP-cone domain; it reads VLVIKKDGRR…VYRDFREVDQ (91 aa).

Belongs to the NrdR family. Requires Zn(2+) as cofactor.

Functionally, negatively regulates transcription of bacterial ribonucleotide reductase nrd genes and operons by binding to NrdR-boxes. In Thermotoga neapolitana (strain ATCC 49049 / DSM 4359 / NBRC 107923 / NS-E), this protein is Transcriptional repressor NrdR.